The primary structure comprises 888 residues: Alanine--tRNA ligase (888 aa).

Zn(2+)-binding residues include H573, H577, C676, and H680.

It belongs to the class-II aminoacyl-tRNA synthetase family. Requires Zn(2+) as cofactor.

It localises to the cytoplasm. The catalysed reaction is tRNA(Ala) + L-alanine + ATP = L-alanyl-tRNA(Ala) + AMP + diphosphate. In terms of biological role, catalyzes the attachment of alanine to tRNA(Ala) in a two-step reaction: alanine is first activated by ATP to form Ala-AMP and then transferred to the acceptor end of tRNA(Ala). Also edits incorrectly charged Ser-tRNA(Ala) and Gly-tRNA(Ala) via its editing domain. This chain is Alanine--tRNA ligase, found in Corynebacterium glutamicum (strain ATCC 13032 / DSM 20300 / JCM 1318 / BCRC 11384 / CCUG 27702 / LMG 3730 / NBRC 12168 / NCIMB 10025 / NRRL B-2784 / 534).